Consider the following 98-residue polypeptide: Integration host factor subunit alpha (98 aa).

Positions phenylalanine 49 to isoleucine 71 are disordered.

It belongs to the bacterial histone-like protein family. As to quaternary structure, heterodimer of an alpha and a beta chain.

Functionally, this protein is one of the two subunits of integration host factor, a specific DNA-binding protein that functions in genetic recombination as well as in transcriptional and translational control. In Shewanella sp. (strain MR-4), this protein is Integration host factor subunit alpha.